The following is a 327-amino-acid chain: MKIIPYRKRSVLIATIFAISAVGITGCSDNTETKAVERVEEAAALARVKDLEARAEALKSNMPAANDMTATAGGTDTASGKPTIKMPDESTIPDDEFGAAVRRGLQISNHTYKELPNNVGNQLNCTSCHLGNGSEAYAAPWNNTPSVYPNYSKRTGRINTIQERINGCFERSLNGKALDLNSDDMNAMVSYMSWLSQDMPFGVSPEGSGFVKVDKTLEPNTDNGKKLFAEKCSVCHGATGEGQYNDDGTYVYPAIAGDKSFNDGAGMARTYTAASFIKGKMPFGQGGSLSDQEAVDIASYFTHLPRPIKANKDKDWPNGDAPKDVRR.

The first 26 residues, 1-26 (MKIIPYRKRSVLIATIFAISAVGITG), serve as a signal peptide directing secretion. Residues 66 to 78 (NDMTATAGGTDTA) show a composition bias toward low complexity. Residues 66–93 (NDMTATAGGTDTASGKPTIKMPDESTIP) form a disordered region. 2 consecutive Cytochrome c domains span residues 99–196 (AAVR…SWLS) and 219–305 (PNTD…THLP). C125, C128, H129, C232, C235, and H236 together coordinate heme c.

As to quaternary structure, monomer. Binds 2 heme c groups covalently per subunit.

It is found in the periplasm. It catalyses the reaction 2 thiosulfate + 2 Fe(III)-[cytochrome c] = tetrathionate + 2 Fe(II)-[cytochrome c] + 2 H(+). Its function is as follows. Catalyzes the oxidation of 2 molecules of thiosulfate to tetrathionate. The protein is Thiosulfate dehydrogenase (tsdA) of Psychrobacter arcticus (strain DSM 17307 / VKM B-2377 / 273-4).